A 634-amino-acid chain; its full sequence is Tyrosine-protein kinase transforming protein erbB (634 aa).

The region spanning 132 to 399 (FKKVKVLGSG…KMARDPPRYL (268 aa)) is the Protein kinase domain. ATP contacts are provided by residues 138–146 (LGSGAFGTV) and Lys-165. The Proton acceptor role is filled by Asp-257.

Belongs to the protein kinase superfamily. Tyr protein kinase family. EGF receptor subfamily.

The catalysed reaction is L-tyrosyl-[protein] + ATP = O-phospho-L-tyrosyl-[protein] + ADP + H(+). In Avian leukosis virus (ALV), this protein is Tyrosine-protein kinase transforming protein erbB (V-ERBB).